Reading from the N-terminus, the 342-residue chain is MATH domain and coiled-coil domain-containing protein At3g44800 (342 aa).

The MATH domain maps to 3-129 (YEKFTWVIKN…NNEVKIVAEV (127 aa)). A coiled-coil region spans residues 253 to 327 (KVDWLERKLE…ALLEKEKGKV (75 aa)).

The polypeptide is MATH domain and coiled-coil domain-containing protein At3g44800 (Arabidopsis thaliana (Mouse-ear cress)).